Reading from the N-terminus, the 83-residue chain is MMIYGILLNIPEKHATKYEDLIRRIIGEGIARGDILSFTEARYKGDVAFVMLARSRRAAEKVYQQLKEHPIHVKVIEIEGKGD.

This is an uncharacterized protein from Methanocaldococcus jannaschii (strain ATCC 43067 / DSM 2661 / JAL-1 / JCM 10045 / NBRC 100440) (Methanococcus jannaschii).